A 798-amino-acid polypeptide reads, in one-letter code: Integrin beta-5 (798 aa).

Residues 1–23 (MPRVPATLYACLLGLCALVPRLA) form the signal peptide. Residues 24–719 (GLNICTSGSA…REPECGSAPN (696 aa)) lie on the Extracellular side of the membrane. The region spanning 27-76 (ICTSGSATSCEECLLIHPKCAWCSKEYFGNPRSITSRCDLKANLIRNGCE) is the PSI domain. 19 disulfide bridges follow: cysteine 28-cysteine 46, cysteine 36-cysteine 463, cysteine 39-cysteine 64, cysteine 49-cysteine 75, cysteine 202-cysteine 211, cysteine 259-cysteine 300, cysteine 401-cysteine 413, cysteine 433-cysteine 461, cysteine 465-cysteine 484, cysteine 476-cysteine 487, cysteine 489-cysteine 498, cysteine 500-cysteine 530, cysteine 513-cysteine 528, cysteine 522-cysteine 533, cysteine 535-cysteine 548, cysteine 550-cysteine 571, cysteine 555-cysteine 569, cysteine 563-cysteine 574, and cysteine 576-cysteine 585. The VWFA domain occupies 136-378 (YPVDLYYLMD…QLIINAYSSI (243 aa)). Mg(2+) contacts are provided by serine 147 and serine 149. Ca(2+) contacts are provided by serine 149, aspartate 152, aspartate 153, and aspartate 184. Ca(2+) contacts are provided by asparagine 242, aspartate 244, proline 246, and glutamate 247. Glutamate 247 lines the Mg(2+) pocket. The N-linked (GlcNAc...) asparagine glycan is linked to asparagine 347. A Ca(2+)-binding site is contributed by glycine 362. Asparagine 460 and asparagine 479 each carry an N-linked (GlcNAc...) asparagine glycan. 4 I-EGF domains span residues 465–499 (CSTGLEPNSARCSGNGTYTCGLCECDPGYLGTRCE), 500–549 (CQEG…PFCE), 550–586 (CDSFSCARNKGVLCSGHGECHCGECKCHAGYIGDNCN), and 587–626 (CSTDVSTCKAKDGQICSDRGRCVCGQCQCTEPGAFGETCE). Asparagine 505 carries N-linked (GlcNAc...) asparagine glycosylation. A glycan (N-linked (GlcNAc...) asparagine) is linked at asparagine 586. 9 cysteine pairs are disulfide-bonded: cysteine 587/cysteine 610, cysteine 594/cysteine 608, cysteine 602/cysteine 613, cysteine 615/cysteine 625, cysteine 628/cysteine 631, cysteine 635/cysteine 682, cysteine 641/cysteine 661, cysteine 644/cysteine 657, and cysteine 690/cysteine 714. N-linked (GlcNAc...) asparagine glycans are attached at residues asparagine 654 and asparagine 705. Residues 720–742 (AMTILLAVVGSILLIGMALLAIW) form a helical membrane-spanning segment. The Cytoplasmic portion of the chain corresponds to 743-798 (KLLVTIHDRREFAKFQSERSRARYEMASNPLYRKPISTHTVDFAFNKFNKSYNGSV). Serine 770 bears the Phosphoserine mark.

It belongs to the integrin beta chain family. In terms of assembly, heterodimer of an alpha and a beta subunit. Beta-5 (ITGB5) associates with alpha-V (ITGAV). Interacts with MYO10. Interacts with DAB2. Integrin ITGAV:ITGB5 interacts with FBLN5 (via N-terminus). ITGAV:ITGB5 interacts with CCN3. Interacts with tensin TNS3; TNS3 also interacts with PEAK1, thus acting as an adapter molecule to bridge the association of PEAK1 with ITGB5.

It localises to the cell membrane. Functionally, integrin alpha-V/beta-5 (ITGAV:ITGB5) is a receptor for fibronectin. It recognizes the sequence R-G-D in its ligand. The protein is Integrin beta-5 (Itgb5) of Mus musculus (Mouse).